The sequence spans 562 residues: Alpha-1D adrenergic receptor (562 aa).

Residues 1-90 (MTFRDILSVT…VGGLVVSAQG (90 aa)) lie on the Extracellular side of the membrane. Disordered stretches follow at residues 13 to 44 (GPRASSSTGGSGAGGGAGTVGPEGPAVGGVPG) and 50 to 69 (AVVGTGSGEDNQSSTAEAGA). The segment covering 21–44 (GGSGAGGGAGTVGPEGPAVGGVPG) has biased composition (gly residues). N-linked (GlcNAc...) asparagine glycans are attached at residues Asn-60 and Asn-76. A helical transmembrane segment spans residues 91 to 115 (VGVGVFLAAFILTAVAGNLLVILSV). Residues 116 to 127 (ACNRHLQTVTNY) lie on the Cytoplasmic side of the membrane. Residues 128 to 153 (FIVNLAVADLLLSAAVLPFSATMEVL) form a helical membrane-spanning segment. Topologically, residues 154 to 163 (GFWPFGRTFC) are extracellular. A helical transmembrane segment spans residues 164–186 (DVWAAVDVLCCTASILSLCTISV). The Cytoplasmic segment spans residues 187–207 (DRYVGVRHSLKYPAIMTERKA). A helical transmembrane segment spans residues 208-232 (AAILALLWAVALVVSVGPLLGWKEP). Residues 233–245 (VPPDERFCGITEE) are Extracellular-facing. A helical transmembrane segment spans residues 246-269 (VGYAIFSSVCSFYLPMAVIVVMYC). Residues 270–342 (RVYVVARSTT…KFSREKKAAK (73 aa)) lie on the Cytoplasmic side of the membrane. The helical transmembrane segment at 343 to 367 (TLAIVVGVFVLCWFPFFFVLPLGSL) threads the bilayer. Residues 368 to 374 (FPQLKPS) lie on the Extracellular side of the membrane. A helical membrane pass occupies residues 375–399 (EGVFKVIFWLGYFNSCVNPLIYPCS). Residues 400–562 (SREFKRAFLR…DLSNLRETDI (163 aa)) are Cytoplasmic-facing. A lipid anchor (S-palmitoyl cysteine) is attached at Cys-413. Positions 444–472 (QPAHRTPRGSPSPHCTPRPGLRRHAGGAG) are disordered.

Belongs to the G-protein coupled receptor 1 family. Adrenergic receptor subfamily. ADRA1D sub-subfamily. As to quaternary structure, interacts with FLNA (via filamin repeat 21); increases PKA-mediated phosphorylation of FLNA. Palmitoylated. Palmitoylation by ZDHHC21 may increase the expression of the receptor and regulate downstream signaling.

The protein resides in the cell membrane. Its function is as follows. This alpha-adrenergic receptor mediates its effect through the influx of extracellular calcium. This Mus musculus (Mouse) protein is Alpha-1D adrenergic receptor (Adra1d).